The chain runs to 221 residues: Growth hormone-releasing peptides (221 aa).

The N-terminal stretch at Met-1–Phe-25 is a signal peptide. The propeptide occupies Ala-26–Arg-95. The residue at position 107 (Phe-107) is a Phenylalanine amide. The propeptide occupies Thr-110 to Lys-127. Phe-136, Phe-156, and Phe-176 each carry phenylalanine amide. Residues Thr-179–Met-221 constitute a propeptide that is removed on maturation.

Belongs to the FARP (FMRFamide related peptide) family. In terms of tissue distribution, observed in the suprachiasmatic nucleus and in several telencephalic and diencephalic regions.

Its subcellular location is the secreted. In terms of biological role, primary role is to release GH from the pituitary. May act as an endogenous ligand in the bullfrog hypothalamo-hypophysial system. The sequence is that of Growth hormone-releasing peptides from Aquarana catesbeiana (American bullfrog).